Consider the following 92-residue polypeptide: MARSLKKNPFVAKNLLKKIYKLNIKTEKEIIITWSRGSTIIPIMVGHTIAIHTGKEHLPIYIMDHMVGHKLGEFAFTLNFRGHAKTDNRSRR.

It belongs to the universal ribosomal protein uS19 family.

The protein localises to the plastid. In terms of biological role, protein S19 forms a complex with S13 that binds strongly to the 16S ribosomal RNA. In Cuscuta reflexa (Southern Asian dodder), this protein is Small ribosomal subunit protein uS19c.